The following is a 1006-amino-acid chain: Probable beta-galactosidase A (1006 aa).

Positions 1-18 (MKLLSVCAIALLAAQAAG) are cleaved as a signal peptide. Residues Tyr96, Asn140, Ala141, and Glu142 each coordinate substrate. An N-linked (GlcNAc...) asparagine glycan is attached at Asn156. Asn199 contacts substrate. Residue Glu200 is the Proton donor of the active site. The cysteines at positions 205 and 206 are disulfide-linked. Tyr260 contributes to the substrate binding site. Cys266 and Cys315 form a disulfide bridge. The active-site Nucleophile is Glu298. Tyr364 contributes to the substrate binding site. N-linked (GlcNAc...) asparagine glycosylation is found at Asn373, Asn402, Asn422, Asn622, Asn760, Asn777, and Asn914.

The protein belongs to the glycosyl hydrolase 35 family.

The protein resides in the secreted. It carries out the reaction Hydrolysis of terminal non-reducing beta-D-galactose residues in beta-D-galactosides.. Functionally, cleaves beta-linked terminal galactosyl residues from gangliosides, glycoproteins, and glycosaminoglycans. This is Probable beta-galactosidase A (lacA) from Aspergillus fumigatus (strain ATCC MYA-4609 / CBS 101355 / FGSC A1100 / Af293) (Neosartorya fumigata).